We begin with the raw amino-acid sequence, 333 residues long: NADH-quinone oxidoreductase subunit H (333 aa).

The next 8 membrane-spanning stretches (helical) occupy residues F15–Y35, F88–F108, I117–T137, I159–L179, V191–E211, W239–V259, I274–V296, and V313–F333.

This sequence belongs to the complex I subunit 1 family. NDH-1 is composed of 14 different subunits. Subunits NuoA, H, J, K, L, M, N constitute the membrane sector of the complex.

It is found in the cell membrane. The enzyme catalyses a quinone + NADH + 5 H(+)(in) = a quinol + NAD(+) + 4 H(+)(out). Functionally, NDH-1 shuttles electrons from NADH, via FMN and iron-sulfur (Fe-S) centers, to quinones in the respiratory chain. The immediate electron acceptor for the enzyme in this species is believed to be ubiquinone. Couples the redox reaction to proton translocation (for every two electrons transferred, four hydrogen ions are translocated across the cytoplasmic membrane), and thus conserves the redox energy in a proton gradient. This subunit may bind ubiquinone. This is NADH-quinone oxidoreductase subunit H from Bacillus thuringiensis subsp. konkukian (strain 97-27).